A 211-amino-acid chain; its full sequence is Thymidylate kinase (211 aa).

7–14 lines the ATP pocket; sequence GIDASGKS.

It belongs to the thymidylate kinase family.

It catalyses the reaction dTMP + ATP = dTDP + ADP. Functionally, phosphorylation of dTMP to form dTDP in both de novo and salvage pathways of dTTP synthesis. This is Thymidylate kinase from Mesomycoplasma hyopneumoniae (strain 7448) (Mycoplasma hyopneumoniae).